The chain runs to 451 residues: UDP-glycosyltransferase 76E11 (451 aa).

UDP-alpha-D-glucose contacts are provided by residues S273, 332–334 (APQ), 349–357 (HCGWNSTLE), and 371–374 (SSDQ).

It belongs to the UDP-glycosyltransferase family.

Its function is as follows. Possesses low quercetin 3-O-glucosyltransferase and 7-O-glucosyltransferase activities in vitro. The sequence is that of UDP-glycosyltransferase 76E11 (UGT76E11) from Arabidopsis thaliana (Mouse-ear cress).